Reading from the N-terminus, the 829-residue chain is Leucine--tRNA ligase (829 aa).

The 'HIGH' region motif lies at 42 to 52 (PYPSGRIHMGH). The 'KMSKS' region motif lies at 584–588 (KMSKS). ATP is bound at residue K587.

Belongs to the class-I aminoacyl-tRNA synthetase family.

Its subcellular location is the cytoplasm. It catalyses the reaction tRNA(Leu) + L-leucine + ATP = L-leucyl-tRNA(Leu) + AMP + diphosphate. This chain is Leucine--tRNA ligase, found in Syntrophobacter fumaroxidans (strain DSM 10017 / MPOB).